We begin with the raw amino-acid sequence, 647 residues long: Putative ferric-chelate reductase 1 homolog (647 aa).

A helical membrane pass occupies residues 10–30 (WLATLVTALLAVAIWPDPGQS). The 171-residue stretch at 25–195 (PDPGQSLPQG…AAPPLPTQSP (171 aa)) folds into the Reelin domain. Asn127 and Asn158 each carry an N-linked (GlcNAc...) asparagine glycan. The DOMON domain maps to 245-368 (TKSCTSITVV…GKYHLLVASG (124 aa)). Residues 372–570 (KENSVGYHDI…HLIFSIGGMA (199 aa)) enclose the Cytochrome b561 domain. A helical transmembrane segment spans residues 408–428 (LHGAFMIAAWIGTTSLGIIFA). Residues His409 and His450 each coordinate heme b. 5 consecutive transmembrane segments (helical) span residues 452-472 (LLMV…WVEL), 480-500 (HSII…GALF), 515-535 (GHWL…FFSV), 548-568 (WILV…SIGG), and 616-636 (LLGV…LLVV). Residues His480 and His516 each coordinate heme b.

Belongs to the FRRS1 family. Heme b serves as cofactor.

Its subcellular location is the membrane. Functionally, putative ferric-chelate reductases reduce Fe(3+) to Fe(2+) before its transport from the endosome to the cytoplasm. This is Putative ferric-chelate reductase 1 homolog from Drosophila melanogaster (Fruit fly).